A 181-amino-acid polypeptide reads, in one-letter code: Gastrokine-3 (181 aa).

The signal sequence occupies residues 1–20 (MKHLVASSILGVFVLTPSLA). In terms of domain architecture, BRICHOS spans 53–145 (NNIFSEWDGI…MCRDDPTYFA (93 aa)). Cysteines 80 and 137 form a disulfide.

It belongs to the gastrokine family.

The protein resides in the secreted. In terms of biological role, may inhibit gastric epithelial cell proliferation. The polypeptide is Gastrokine-3 (GKN3P) (Homo sapiens (Human)).